The following is a 200-amino-acid chain: dTTP/UTP pyrophosphatase (200 aa).

Aspartate 72 serves as the catalytic Proton acceptor.

The protein belongs to the Maf family. YhdE subfamily. The cofactor is a divalent metal cation.

Its subcellular location is the cytoplasm. It catalyses the reaction dTTP + H2O = dTMP + diphosphate + H(+). The enzyme catalyses UTP + H2O = UMP + diphosphate + H(+). Its function is as follows. Nucleoside triphosphate pyrophosphatase that hydrolyzes dTTP and UTP. May have a dual role in cell division arrest and in preventing the incorporation of modified nucleotides into cellular nucleic acids. The chain is dTTP/UTP pyrophosphatase from Pseudomonas syringae pv. syringae (strain B728a).